The following is a 34-amino-acid chain: Ornithine carbamoyltransferase, catabolic (34 aa).

It belongs to the aspartate/ornithine carbamoyltransferase superfamily. OTCase family. As to quaternary structure, probably nonameric or dodecameric.

It localises to the cytoplasm. The catalysed reaction is carbamoyl phosphate + L-ornithine = L-citrulline + phosphate + H(+). The protein operates within amino-acid degradation; L-arginine degradation via ADI pathway; carbamoyl phosphate from L-arginine: step 2/2. The polypeptide is Ornithine carbamoyltransferase, catabolic (arcB) (Pseudomonas putida (Arthrobacter siderocapsulatus)).